The primary structure comprises 493 residues: Ribose import ATP-binding protein RbsA (493 aa).

ABC transporter domains follow at residues 3-239 (IEMK…VGRE) and 246-493 (KRTP…TGGR). 35 to 42 (GENGAGKS) is an ATP binding site.

The protein belongs to the ABC transporter superfamily. Ribose importer (TC 3.A.1.2.1) family. The complex is composed of an ATP-binding protein (RbsA), two transmembrane proteins (RbsC) and a solute-binding protein (RbsB).

It is found in the cell membrane. It carries out the reaction D-ribose(out) + ATP + H2O = D-ribose(in) + ADP + phosphate + H(+). Its function is as follows. Part of the ABC transporter complex RbsABC involved in ribose import. Responsible for energy coupling to the transport system. The protein is Ribose import ATP-binding protein RbsA of Bacillus subtilis (strain 168).